The following is a 59-amino-acid chain: UPF0181 protein YoaH (59 aa).

It belongs to the UPF0181 family.

The protein is UPF0181 protein YoaH of Shigella flexneri serotype 5b (strain 8401).